The sequence spans 61 residues: Potassium channel toxin alpha-KTx 5.3 (61 aa).

Positions 1-28 (MHNYYKIVLIMVAFFAVIITFSNIQVEG) are cleaved as a signal peptide. Cystine bridges form between C31–C49, C36–C54, and C40–C56. The interval 34–37 (KRCQ) is [R/K]XCQ motif. The residue at position 59 (H59) is a Histidine amide.

The protein belongs to the short scorpion toxin superfamily. Potassium channel inhibitor family. Alpha-KTx 05 subfamily. As to expression, expressed by the venom gland.

It is found in the secreted. Its function is as follows. Blocks small conductance calcium-activated potassium channels (KCNN, SK). Has also been shown to weakly inhibit Kv11.1/KCNH2/ERG1, Kv1.2/KCNA2, Kv1.3/KCNA3 and Kv2.1/KCNB1 voltage-gated potassium channels. The protein is Potassium channel toxin alpha-KTx 5.3 of Olivierus martensii (Manchurian scorpion).